We begin with the raw amino-acid sequence, 117 residues long: Non-specific lipid-transfer protein (117 aa).

The signal sequence occupies residues 1 to 26 (MASSAVIKLACAVLLCIVVAAPYAEA). 4 disulfides stabilise this stretch: Cys-30/Cys-76, Cys-40/Cys-53, Cys-54/Cys-99, and Cys-74/Cys-113.

The protein belongs to the plant LTP family.

In terms of biological role, plant non-specific lipid-transfer proteins transfer phospholipids as well as galactolipids across membranes. May play a role in wax or cutin deposition in the cell walls of expanding epidermal cells and certain secretory tissues. The protein is Non-specific lipid-transfer protein of Spinacia oleracea (Spinach).